Consider the following 91-residue polypeptide: Small ribosomal subunit protein uS19 (91 aa).

This sequence belongs to the universal ribosomal protein uS19 family.

Functionally, protein S19 forms a complex with S13 that binds strongly to the 16S ribosomal RNA. This Cupriavidus pinatubonensis (strain JMP 134 / LMG 1197) (Cupriavidus necator (strain JMP 134)) protein is Small ribosomal subunit protein uS19.